The sequence spans 271 residues: Mannosyl-3-phosphoglycerate phosphatase (271 aa).

The active-site Nucleophile is the Asp13. Asp13, Asp15, and Asp214 together coordinate Mg(2+).

This sequence belongs to the HAD-like hydrolase superfamily. MPGP family. Requires Mg(2+) as cofactor.

It is found in the cytoplasm. It carries out the reaction 2-O-(alpha-D-mannosyl)-3-phosphoglycerate + H2O = (2R)-2-O-(alpha-D-mannosyl)-glycerate + phosphate. The protein is Mannosyl-3-phosphoglycerate phosphatase of Escherichia coli O7:K1 (strain IAI39 / ExPEC).